The chain runs to 249 residues: 2-C-methyl-D-erythritol 4-phosphate cytidylyltransferase (249 aa).

This sequence belongs to the IspD/TarI cytidylyltransferase family. IspD subfamily.

The catalysed reaction is 2-C-methyl-D-erythritol 4-phosphate + CTP + H(+) = 4-CDP-2-C-methyl-D-erythritol + diphosphate. Its pathway is isoprenoid biosynthesis; isopentenyl diphosphate biosynthesis via DXP pathway; isopentenyl diphosphate from 1-deoxy-D-xylulose 5-phosphate: step 2/6. Functionally, catalyzes the formation of 4-diphosphocytidyl-2-C-methyl-D-erythritol from CTP and 2-C-methyl-D-erythritol 4-phosphate (MEP). The polypeptide is 2-C-methyl-D-erythritol 4-phosphate cytidylyltransferase (Thermobifida fusca (strain YX)).